Here is a 213-residue protein sequence, read N- to C-terminus: Orotate phosphoribosyltransferase (213 aa).

Lys26 provides a ligand contact to 5-phospho-alpha-D-ribose 1-diphosphate. 34-35 (FF) contacts orotate. 5-phospho-alpha-D-ribose 1-diphosphate is bound by residues 72-73 (YK), Arg99, Lys100, Lys103, His105, and 124-132 (DDVITAGTA). Orotate contacts are provided by Thr128 and Arg156.

This sequence belongs to the purine/pyrimidine phosphoribosyltransferase family. PyrE subfamily. As to quaternary structure, homodimer. It depends on Mg(2+) as a cofactor.

It catalyses the reaction orotidine 5'-phosphate + diphosphate = orotate + 5-phospho-alpha-D-ribose 1-diphosphate. It functions in the pathway pyrimidine metabolism; UMP biosynthesis via de novo pathway; UMP from orotate: step 1/2. Functionally, catalyzes the transfer of a ribosyl phosphate group from 5-phosphoribose 1-diphosphate to orotate, leading to the formation of orotidine monophosphate (OMP). In Pseudomonas savastanoi pv. phaseolicola (strain 1448A / Race 6) (Pseudomonas syringae pv. phaseolicola (strain 1448A / Race 6)), this protein is Orotate phosphoribosyltransferase.